Here is a 1788-residue protein sequence, read N- to C-terminus: Genome polyprotein (1788 aa).

An interaction with host MAP1LC3A/LC3 region spans residues 1-184; sequence MMMASKDVVA…LCPLPPIDLR (184 aa). Residues 58-68 are compositionally biased toward low complexity; sequence GRTTPEPTGTA. The tract at residues 58–86 is disordered; sequence GRTTPEPTGTAGPPPKQQRDRPPRTQEEV. Residues 74-84 show a composition bias toward basic and acidic residues; the sequence is QQRDRPPRTQE. Residues 185 to 399 form an interaction with NTPase region; the sequence is NMEPASEPTI…ASLLPDFHLQ (215 aa). Positions 302–399 are interaction with NS4; it reads HPTQSWSQQT…ASLLPDFHLQ (98 aa). Host ER membrane association stretches follow at residues 319 to 350 and 361 to 399; these read KLELVRDAILAAVNGLVSQPFKNFLGKLKPLN and TFMGVVEMVILLLELFGVFWNPPDVSNFIASLLPDFHLQ. The segment at 400–575 is interaction with NS1-2 and NS4 and homooligomerization; sequence GPEDLARDLV…GKTKAAEHLA (176 aa). One can recognise an SF3 helicase domain in the interval 533–698; it reads RISMARSALA…EQIRRVSPGD (166 aa). 561–568 lines the ATP pocket; that stretch reads GPPGIGKT. Residues 652–757 are important for mitochondrion targeting; that stretch reads AIVITTNAPG…AVALTMERQD (106 aa). Positions 827–833 are functions as endoplasmic reticulum export signal; the sequence is YSLESDG. The host membrane association stretch occupies residues 866–911; that stretch reads RAVAYASCIQSAITSILQIAGSALVVNRAVKRMFGTRTATLSLEGP. Residues 948 to 979 are disordered; it reads EEVAHTEIPSATMEGKNKGKNKKGRGRRNNYN. Over residues 965–975 the composition is skewed to basic residues; the sequence is KGKNKKGRGRR. The tract at residues 988-993 is acidic; sequence DEEYEE. Tyrosine 991 carries the post-translational modification O-(5'-phospho-RNA)-tyrosine. The interaction with host EIF4G stretch occupies residues 1083–1099; it reads WADDEREVDYNEKISFE. The Peptidase C37 domain maps to 1100–1280; sequence APPTLWSRVT…QASEGETTLE (181 aa). Active-site for 3CLpro activity residues include histidine 1129, glutamate 1153, and cysteine 1238. Residues 1515-1636 enclose the RdRp catalytic domain; the sequence is KYHFDADYTA…STDIEFDPAK (122 aa). 4 residues coordinate Mg(2+): aspartate 1519, aspartate 1521, aspartate 1623, and glutamate 1624.

As to quaternary structure, homodimer. Homooligomer. Interacts with NTPase; this interaction increases the proapoptotic activity of the NTPase and is crucial for the formation of the viral replication complex. Interacts with NS4; this interaction is crucial for the formation of the viral replication complex. Interacts (via N-terminus) with host VAPA. Interacts with host MAP1LC3A/LC3; this interaction does not seem to be linked to host autophagy, but rather plays a role in the formation of viral factories. In terms of assembly, homooligomer. Interacts with NS1-2; this interaction increases the proapoptotic activity of the NTPase and is crucial for the formation of the viral replication complex. Interacts with NS4; this interaction increases the proapoptotic activity of the NTPase. Homodimer. Monomer; in solution. As to quaternary structure, interacts with NTPase; this interaction increases the proapoptotic activity of the NTPase. Interacts with NS1-2; this interaction is crucial for the formation of the viral replication complex. In terms of assembly, monomer. Interacts with the RNA-directed RNA polymerase; this interaction induces the multimerization of the RdRp and enhances its activity. Interacts with host IEF4G1; this interaction plays a role in translation of viral proteins. Homohexamer; also forms fibrous hexameric oligomer. Interacts with the viral genome-linked protein; this interaction induces the multimerization of the RdRp and enhances its activity. It depends on Mg(2+) as a cofactor. Mn(2+) serves as cofactor. Post-translationally, specific enzymatic cleavages in vivo yield mature proteins. 3CLpro is first autocatalytically cleaved, then processes the whole polyprotein. NS1/2-3 and NS3-4 sites are cleaved rapidly and NS4-5, NS5-6, and NS6-7 sites are processed subsequently and less efficiently. In terms of processing, VPg is uridylylated by the polymerase and is covalently attached to the 5'-end of the polyadenylated genomic and subgenomic RNAs. This uridylylated form acts as a nucleotide-peptide primer for the polymerase.

The protein resides in the host Golgi apparatus membrane. It localises to the host endoplasmic reticulum membrane. It catalyses the reaction a ribonucleoside 5'-triphosphate + H2O = a ribonucleoside 5'-diphosphate + phosphate + H(+). The catalysed reaction is Endopeptidase with a preference for cleavage when the P1 position is occupied by Glu-|-Xaa and the P1' position is occupied by Gly-|-Yaa.. The enzyme catalyses RNA(n) + a ribonucleoside 5'-triphosphate = RNA(n+1) + diphosphate. Functionally, induces the proliferation of the host smooth ER membranes forming long tubular structures. These remodeled membranes probably form the viral factories that contain the replication complex. May play a role in viral replication by interacting with host VAPA, a vesicle-associated membrane protein that plays a role in SNARE-mediated vesicle fusion. This interaction may target replication complex to intracellular membranes. In terms of biological role, displays NTPase activity, but no helicase activity. Induces the formation of convoluted membranes derived from the host ER. These remodeled membranes probably form the viral factories that contain the replication complex. Initiates host cell death by targeting the mitochondrial outer membrane, leading to the permeabilization of mitochondria, programmed host cell death and viral egress. Probably plays a role in preventing the assembly of host stress granules. Its function is as follows. Probable key protein responsible for the formation of membrane alterations by the virus. Induces the formation of convoluted membranes derived from the host ER. These remodeled membranes probably form the viral factories that contain the replication complex. May play a role in targeting replication complex to intracellular membranes. Viral genome-linked protein is covalently linked to the 5'-end of the positive-strand, negative-strand genomic RNAs and subgenomic RNA. Acts as a genome-linked replication primer. May recruit ribosome to viral RNA thereby promoting viral proteins translation. Interacts with host translation initiation complex to allow the translation of viral proteins. Induces the formation of aggregates of RNA-directed RNA polymerase in the presence of RNA. Through its interaction with the viral RNA-directed RNA polymerase, plays a crucial role in enhancing the polymerase activity. Functionally, processes the polyprotein. 3CLpro-RdRp is first released by autocleavage, then all other proteins are cleaved. May cleave polyadenylate-binding protein thereby inhibiting cellular translation. In terms of biological role, replicates genomic and antigenomic RNA by recognizing replications specific signals. Also transcribes a subgenomic mRNA by initiating RNA synthesis internally on antigenomic RNA. This sgRNA codes for structural proteins. Catalyzes the covalent attachment VPg with viral RNAs. The protein is Genome polyprotein of Southampton virus (strain GI/Human/United Kingdom/Southampton/1991) (SHV).